We begin with the raw amino-acid sequence, 453 residues long: Na(+)/H(+) antiporter NhaA (453 aa).

The next 12 membrane-spanning stretches (helical) occupy residues F27–M47, L78–I98, I114–F134, G143–G163, I172–F192, G201–A221, S222–I242, V249–I269, P316–A336, F346–T366, W385–V405, and I421–Y441.

This sequence belongs to the NhaA Na(+)/H(+) (TC 2.A.33) antiporter family.

It is found in the cell inner membrane. It catalyses the reaction Na(+)(in) + 2 H(+)(out) = Na(+)(out) + 2 H(+)(in). Functionally, na(+)/H(+) antiporter that extrudes sodium in exchange for external protons. The polypeptide is Na(+)/H(+) antiporter NhaA (Bartonella henselae (strain ATCC 49882 / DSM 28221 / CCUG 30454 / Houston 1) (Rochalimaea henselae)).